The chain runs to 140 residues: Nucleoside diphosphate kinase (140 aa).

Positions 11, 59, 87, 93, 104, and 114 each coordinate ATP. Catalysis depends on H117, which acts as the Pros-phosphohistidine intermediate.

Belongs to the NDK family. As to quaternary structure, homotetramer. Requires Mg(2+) as cofactor.

It is found in the cytoplasm. It catalyses the reaction a 2'-deoxyribonucleoside 5'-diphosphate + ATP = a 2'-deoxyribonucleoside 5'-triphosphate + ADP. The enzyme catalyses a ribonucleoside 5'-diphosphate + ATP = a ribonucleoside 5'-triphosphate + ADP. Major role in the synthesis of nucleoside triphosphates other than ATP. The ATP gamma phosphate is transferred to the NDP beta phosphate via a ping-pong mechanism, using a phosphorylated active-site intermediate. This Rhodopseudomonas palustris (strain BisB5) protein is Nucleoside diphosphate kinase.